We begin with the raw amino-acid sequence, 468 residues long: MSAVMTPAGFTDFKVADISLAAWGRREIIIAESEMPALMGLRRKYAAEQPLKGAKILGCIHMTIQTAVLIETLIALGAEVRWSSCNIFSTQDQAAAAIAAAGIPVFAWKGETEEEYEWCIEQTILKDGQPWDANMVLDDGGDLTQILHDKYPQVLERVHGITEETTTGVHRLLDMLKGGTLKVPAINVNDSVTKSKNDNKYGCRHSLNDAIKRATDHLLSGKQALVIGYGDVGKGSAQSLRQEGMIVKVSEVDPICAMQACMDGFELVSPYKNGINDGTEASVDAALLGKIDLIVTTTGNVNVCDAGMLKALKKRAVVCNIGHFDNEIDTAFMRQNWGWEEVKPQVHKIHRTGKTVDPTNDDYLILLAEGRLVNLGNATGHPSRIMDGSFANQVLAQIHLYNEKFADLPVAEKTQNVTVMVLPKKLDEEVALEMVKGFGGVVTQLTAKQAEYIGVAVEGPFKPDSYRY.

Substrate is bound by residues Thr-63, Asp-139, and Glu-164. 165-167 contacts NAD(+); it reads TTT. The substrate site is built by Lys-194 and Asp-198. NAD(+) is bound by residues Asn-199, 228-233, Glu-251, Asn-300, 321-323, and Asn-374; these read GYGDVG and IGH.

The protein belongs to the adenosylhomocysteinase family. The cofactor is NAD(+).

It is found in the cytoplasm. It carries out the reaction S-adenosyl-L-homocysteine + H2O = L-homocysteine + adenosine. It participates in amino-acid biosynthesis; L-homocysteine biosynthesis; L-homocysteine from S-adenosyl-L-homocysteine: step 1/1. In terms of biological role, may play a key role in the regulation of the intracellular concentration of adenosylhomocysteine. The chain is Adenosylhomocysteinase from Stutzerimonas stutzeri (strain A1501) (Pseudomonas stutzeri).